The sequence spans 642 residues: Threonine--tRNA ligase (642 aa).

The TGS domain occupies 1–61 (MPIITLPDGS…TADSELAIIT (61 aa)). Residues 243–534 (DHRKIGKQLD…LIEEYAGKFP (292 aa)) are catalytic. Zn(2+) contacts are provided by Cys334, His385, and His511.

The protein belongs to the class-II aminoacyl-tRNA synthetase family. Homodimer. The cofactor is Zn(2+).

It localises to the cytoplasm. It catalyses the reaction tRNA(Thr) + L-threonine + ATP = L-threonyl-tRNA(Thr) + AMP + diphosphate + H(+). Its function is as follows. Catalyzes the attachment of threonine to tRNA(Thr) in a two-step reaction: L-threonine is first activated by ATP to form Thr-AMP and then transferred to the acceptor end of tRNA(Thr). Also edits incorrectly charged L-seryl-tRNA(Thr). This is Threonine--tRNA ligase from Shewanella frigidimarina (strain NCIMB 400).